A 220-amino-acid polypeptide reads, in one-letter code: Thiamine-phosphate synthase (220 aa).

Residues 39–43 (QLRDK) and N80 each bind 4-amino-2-methyl-5-(diphosphooxymethyl)pyrimidine. Residues D81 and D100 each contribute to the Mg(2+) site. S119 contacts 4-amino-2-methyl-5-(diphosphooxymethyl)pyrimidine. 145–147 (TPT) serves as a coordination point for 2-[(2R,5Z)-2-carboxy-4-methylthiazol-5(2H)-ylidene]ethyl phosphate. K148 serves as a coordination point for 4-amino-2-methyl-5-(diphosphooxymethyl)pyrimidine. G176 provides a ligand contact to 2-[(2R,5Z)-2-carboxy-4-methylthiazol-5(2H)-ylidene]ethyl phosphate.

This sequence belongs to the thiamine-phosphate synthase family. Mg(2+) serves as cofactor.

It carries out the reaction 2-[(2R,5Z)-2-carboxy-4-methylthiazol-5(2H)-ylidene]ethyl phosphate + 4-amino-2-methyl-5-(diphosphooxymethyl)pyrimidine + 2 H(+) = thiamine phosphate + CO2 + diphosphate. The enzyme catalyses 2-(2-carboxy-4-methylthiazol-5-yl)ethyl phosphate + 4-amino-2-methyl-5-(diphosphooxymethyl)pyrimidine + 2 H(+) = thiamine phosphate + CO2 + diphosphate. The catalysed reaction is 4-methyl-5-(2-phosphooxyethyl)-thiazole + 4-amino-2-methyl-5-(diphosphooxymethyl)pyrimidine + H(+) = thiamine phosphate + diphosphate. The protein operates within cofactor biosynthesis; thiamine diphosphate biosynthesis; thiamine phosphate from 4-amino-2-methyl-5-diphosphomethylpyrimidine and 4-methyl-5-(2-phosphoethyl)-thiazole: step 1/1. In terms of biological role, condenses 4-methyl-5-(beta-hydroxyethyl)thiazole monophosphate (THZ-P) and 2-methyl-4-amino-5-hydroxymethyl pyrimidine pyrophosphate (HMP-PP) to form thiamine monophosphate (TMP). The polypeptide is Thiamine-phosphate synthase (Mycobacterium ulcerans (strain Agy99)).